The chain runs to 139 residues: Transcription antitermination protein NusB (139 aa).

This sequence belongs to the NusB family.

Functionally, involved in transcription antitermination. Required for transcription of ribosomal RNA (rRNA) genes. Binds specifically to the boxA antiterminator sequence of the ribosomal RNA (rrn) operons. The polypeptide is Transcription antitermination protein NusB (Klebsiella pneumoniae (strain 342)).